The sequence spans 525 residues: cAMP-dependent protein kinase regulatory subunit (525 aa).

Residues 28-213 form a dimerization and phosphorylation region; the sequence is QFCANWFNSK…RIRGSIGNNL (186 aa). Disordered regions lie at residues 114-146 and 170-196; these read MDASQSPDSTPAPATPAAPAAPAAPAAPFSSLG and SVSAESMAPSAANAESDGSPLPKTVIP. The span at 124-146 shows a compositional bias: low complexity; that stretch reads PAPATPAAPAAPAAPAAPFSSLG. Ser170 carries the phosphoserine; by autocatalysis modification. A nucleoside 3',5'-cyclic phosphate contacts are provided by residues 214–345 and 348–472; these read LFRN…FLMD and LFER…TYGD. Positions 295, 304, and 417 each coordinate 3',5'-cyclic AMP. Residues 497–525 form a disordered region; that stretch reads SGADTSFPHPMDSSAKPGEGAWSAPNPFA.

Belongs to the cAMP-dependent kinase regulatory chain family. Tetramer, composed of 2 regulatory (R) and 2 catalytic (C) subunits. In the presence of cAMP it dissociates into 2 active monomeric C subunits and an R dimer.

In Mycosarcoma maydis (Corn smut fungus), this protein is cAMP-dependent protein kinase regulatory subunit (PKAR).